The primary structure comprises 393 residues: Probable acetyl-CoA acetyltransferase (393 aa).

A propeptide (removed; alternate) is located at residue Thr2. The Acyl-thioester intermediate role is filled by Cys88. Residues His349 and Cys379 each act as proton acceptor in the active site.

This sequence belongs to the thiolase-like superfamily. Thiolase family.

The enzyme catalyses 2 acetyl-CoA = acetoacetyl-CoA + CoA. The polypeptide is Probable acetyl-CoA acetyltransferase (fadA4) (Mycobacterium tuberculosis (strain ATCC 25618 / H37Rv)).